We begin with the raw amino-acid sequence, 72 residues long: ATP synthase subunit c (72 aa).

2 helical membrane-spanning segments follow: residues 1–21 (MSLG…GAGI) and 48–68 (MFIG…FSFI).

Belongs to the ATPase C chain family. F-type ATPases have 2 components, F(1) - the catalytic core - and F(0) - the membrane proton channel. F(1) has five subunits: alpha(3), beta(3), gamma(1), delta(1), epsilon(1). F(0) has three main subunits: a(1), b(2) and c(10-14). The alpha and beta chains form an alternating ring which encloses part of the gamma chain. F(1) is attached to F(0) by a central stalk formed by the gamma and epsilon chains, while a peripheral stalk is formed by the delta and b chains.

Its subcellular location is the cell membrane. F(1)F(0) ATP synthase produces ATP from ADP in the presence of a proton or sodium gradient. F-type ATPases consist of two structural domains, F(1) containing the extramembraneous catalytic core and F(0) containing the membrane proton channel, linked together by a central stalk and a peripheral stalk. During catalysis, ATP synthesis in the catalytic domain of F(1) is coupled via a rotary mechanism of the central stalk subunits to proton translocation. Its function is as follows. Key component of the F(0) channel; it plays a direct role in translocation across the membrane. A homomeric c-ring of between 10-14 subunits forms the central stalk rotor element with the F(1) delta and epsilon subunits. This Geobacillus stearothermophilus (Bacillus stearothermophilus) protein is ATP synthase subunit c.